We begin with the raw amino-acid sequence, 153 residues long: Putative riboflavin kinase (153 aa).

Mg(2+) is bound by residues threonine 28 and asparagine 30. The active-site Nucleophile is the glutamate 80.

As to quaternary structure, monomer. Zn(2+) serves as cofactor. Mg(2+) is required as a cofactor.

The protein localises to the cytoplasm. It catalyses the reaction riboflavin + ATP = FMN + ADP + H(+). The protein operates within cofactor biosynthesis; FMN biosynthesis; FMN from riboflavin (ATP route): step 1/1. Its function is as follows. Catalyzes the phosphorylation of riboflavin (vitamin B2) to form flavin-mononucleotide (FMN). The protein is Putative riboflavin kinase of Drosophila melanogaster (Fruit fly).